Consider the following 296-residue polypeptide: Sulfotransferase 1C2 (296 aa).

A 3'-phosphoadenylyl sulfate-binding site is contributed by 49–54 (KSGTTW). 107–109 (RTH) is a binding site for substrate. Residue histidine 109 is the Proton acceptor of the active site. 3'-phosphoadenylyl sulfate is bound by residues arginine 131, serine 139, tyrosine 194, and 228-233 (TSFEKM). Serine 139 bears the Phosphoserine mark. A Phosphoserine modification is found at serine 254. Position 256–260 (256–260 (FMRKG)) interacts with 3'-phosphoadenylyl sulfate.

It belongs to the sulfotransferase 1 family. Highly expressed in kidney and at lower levels in stomach and liver. More specifically found in the epithelia of proximal tubules of the kidney, of the bile duct, of the gastric mucosa, and in hepatocytes.

It is found in the cytoplasm. Its subcellular location is the lysosome. The protein resides in the mitochondrion. It carries out the reaction a phenol + 3'-phosphoadenylyl sulfate = an aryl sulfate + adenosine 3',5'-bisphosphate + H(+). The catalysed reaction is cholesterol + 3'-phosphoadenylyl sulfate = cholesterol sulfate + adenosine 3',5'-bisphosphate + H(+). Functionally, sulfotransferase that utilizes 3'-phospho-5'-adenylyl sulfate (PAPS) to catalyze the sulfate conjugation of phenolic compounds. Does not transfer sulfate to steroids, dopamine, acetaminophen, or alpha-naphthol. Except in mitochondria, where it can add sulfate to cholesterol producing cholesterol sulfate, which alters mitochondrial membrane organization, and impacts protein complex mobility increasing state-III respiration, thereby modulating mitochondrial respiration. Catalyzes the sulfation of the carcinogenic N-hydroxy-2-acetylaminofluorene leading to highly reactive intermediates capable of forming DNA adducts, potentially resulting in mutagenesis. This chain is Sulfotransferase 1C2 (Sult1c2), found in Rattus norvegicus (Rat).